Consider the following 93-residue polypeptide: DNA-directed RNA polymerase subunit omega (93 aa).

Belongs to the RNA polymerase subunit omega family. As to quaternary structure, the RNAP catalytic core consists of 2 alpha, 1 beta, 1 beta' and 1 omega subunit. When a sigma factor is associated with the core the holoenzyme is formed, which can initiate transcription.

It catalyses the reaction RNA(n) + a ribonucleoside 5'-triphosphate = RNA(n+1) + diphosphate. In terms of biological role, promotes RNA polymerase assembly. Latches the N- and C-terminal regions of the beta' subunit thereby facilitating its interaction with the beta and alpha subunits. This chain is DNA-directed RNA polymerase subunit omega, found in Shewanella piezotolerans (strain WP3 / JCM 13877).